Consider the following 545-residue polypeptide: CTP synthase (545 aa).

The amidoligase domain stretch occupies residues 1–266; that stretch reads MTTNYIFVTG…DDLVCARFGI (266 aa). Ser-14 provides a ligand contact to CTP. Ser-14 serves as a coordination point for UTP. Residues 15–20 and Asp-72 each bind ATP; that span reads SLGKGI. Mg(2+) is bound by residues Asp-72 and Glu-140. CTP is bound by residues 147–149, 187–192, and Lys-223; these read DIE and KTKPTQ. Residues 187 to 192 and Lys-223 each bind UTP; that span reads KTKPTQ. 239–241 provides a ligand contact to ATP; the sequence is KDV. The 252-residue stretch at 291–542 folds into the Glutamine amidotransferase type-1 domain; that stretch reads TIGMVGKYTE…VKAAGQFQRG (252 aa). L-glutamine is bound at residue Gly-352. Cys-379 (nucleophile; for glutamine hydrolysis) is an active-site residue. L-glutamine-binding positions include 380 to 383, Glu-403, and Arg-470; that span reads LGMQ. Active-site residues include His-515 and Glu-517.

Belongs to the CTP synthase family. As to quaternary structure, homotetramer.

The catalysed reaction is UTP + L-glutamine + ATP + H2O = CTP + L-glutamate + ADP + phosphate + 2 H(+). The enzyme catalyses L-glutamine + H2O = L-glutamate + NH4(+). It carries out the reaction UTP + NH4(+) + ATP = CTP + ADP + phosphate + 2 H(+). It functions in the pathway pyrimidine metabolism; CTP biosynthesis via de novo pathway; CTP from UDP: step 2/2. Allosterically activated by GTP, when glutamine is the substrate; GTP has no effect on the reaction when ammonia is the substrate. The allosteric effector GTP functions by stabilizing the protein conformation that binds the tetrahedral intermediate(s) formed during glutamine hydrolysis. Inhibited by the product CTP, via allosteric rather than competitive inhibition. Catalyzes the ATP-dependent amination of UTP to CTP with either L-glutamine or ammonia as the source of nitrogen. Regulates intracellular CTP levels through interactions with the four ribonucleotide triphosphates. The protein is CTP synthase of Vibrio cholerae serotype O1 (strain ATCC 39541 / Classical Ogawa 395 / O395).